A 326-amino-acid chain; its full sequence is 4-hydroxy-3-methylbut-2-enyl diphosphate reductase 1 (326 aa).

Cysteine 27 provides a ligand contact to [4Fe-4S] cluster. (2E)-4-hydroxy-3-methylbut-2-enyl diphosphate is bound by residues histidine 56 and histidine 89. Dimethylallyl diphosphate contacts are provided by histidine 56 and histidine 89. Residues histidine 56 and histidine 89 each coordinate isopentenyl diphosphate. Cysteine 111 contributes to the [4Fe-4S] cluster binding site. Residue histidine 139 coordinates (2E)-4-hydroxy-3-methylbut-2-enyl diphosphate. Dimethylallyl diphosphate is bound at residue histidine 139. Histidine 139 provides a ligand contact to isopentenyl diphosphate. Glutamate 141 (proton donor) is an active-site residue. A (2E)-4-hydroxy-3-methylbut-2-enyl diphosphate-binding site is contributed by threonine 179. [4Fe-4S] cluster is bound at residue cysteine 209. The (2E)-4-hydroxy-3-methylbut-2-enyl diphosphate site is built by serine 237, serine 238, asparagine 239, and serine 281. Positions 237, 238, 239, and 281 each coordinate dimethylallyl diphosphate. Residues serine 237, serine 238, asparagine 239, and serine 281 each contribute to the isopentenyl diphosphate site.

This sequence belongs to the IspH family. The cofactor is [4Fe-4S] cluster.

The enzyme catalyses isopentenyl diphosphate + 2 oxidized [2Fe-2S]-[ferredoxin] + H2O = (2E)-4-hydroxy-3-methylbut-2-enyl diphosphate + 2 reduced [2Fe-2S]-[ferredoxin] + 2 H(+). It catalyses the reaction dimethylallyl diphosphate + 2 oxidized [2Fe-2S]-[ferredoxin] + H2O = (2E)-4-hydroxy-3-methylbut-2-enyl diphosphate + 2 reduced [2Fe-2S]-[ferredoxin] + 2 H(+). It participates in isoprenoid biosynthesis; dimethylallyl diphosphate biosynthesis; dimethylallyl diphosphate from (2E)-4-hydroxy-3-methylbutenyl diphosphate: step 1/1. Its pathway is isoprenoid biosynthesis; isopentenyl diphosphate biosynthesis via DXP pathway; isopentenyl diphosphate from 1-deoxy-D-xylulose 5-phosphate: step 6/6. In terms of biological role, catalyzes the conversion of 1-hydroxy-2-methyl-2-(E)-butenyl 4-diphosphate (HMBPP) into a mixture of isopentenyl diphosphate (IPP) and dimethylallyl diphosphate (DMAPP). Acts in the terminal step of the DOXP/MEP pathway for isoprenoid precursor biosynthesis. In Burkholderia pseudomallei (strain K96243), this protein is 4-hydroxy-3-methylbut-2-enyl diphosphate reductase 1.